Reading from the N-terminus, the 506-residue chain is Cytochrome P450 6a8 (506 aa).

Cys-451 provides a ligand contact to heme.

The protein belongs to the cytochrome P450 family. The cofactor is heme.

Its subcellular location is the endoplasmic reticulum membrane. The protein localises to the microsome membrane. Involved in the metabolism of insect hormones and in the breakdown of synthetic insecticides. The polypeptide is Cytochrome P450 6a8 (Cyp6a8) (Drosophila melanogaster (Fruit fly)).